The chain runs to 415 residues: tRNA(Met) cytidine acetate ligase (415 aa).

Residues 7-20 (IVEY…HLYH), Gly-102, Asn-165, and 190-191 (RI) contribute to the ATP site.

The protein belongs to the TmcAL family.

The protein resides in the cytoplasm. It carries out the reaction cytidine(34) in elongator tRNA(Met) + acetate + ATP = N(4)-acetylcytidine(34) in elongator tRNA(Met) + AMP + diphosphate. Functionally, catalyzes the formation of N(4)-acetylcytidine (ac(4)C) at the wobble position of elongator tRNA(Met), using acetate and ATP as substrates. First activates an acetate ion to form acetyladenylate (Ac-AMP) and then transfers the acetyl group to tRNA to form ac(4)C34. The sequence is that of tRNA(Met) cytidine acetate ligase from Acetivibrio thermocellus (strain ATCC 27405 / DSM 1237 / JCM 9322 / NBRC 103400 / NCIMB 10682 / NRRL B-4536 / VPI 7372) (Clostridium thermocellum).